Here is a 710-residue protein sequence, read N- to C-terminus: Interleukin-1 receptor-associated kinase 1 (710 aa).

The Death domain maps to 27–106 (MCRFYKVMDA…DIITAWHPPA (80 aa)). At threonine 66 the chain carries Phosphothreonine; by PKC/PRKCI. Positions 107-133 (PVVPPSTAAPRPSSISAGSEAGDWSPR) are disordered. The interval 110–211 (PPSTAAPRPS…FCEISQGTCN (102 aa)) is proST region. Over residues 111–123 (PSTAAPRPSSISA) the composition is skewed to low complexity. Serine 131 is subject to Phosphoserine. Residues lysine 134 and lysine 180 each participate in a glycyl lysine isopeptide (Lys-Gly) (interchain with G-Cter in ubiquitin) cross-link. A disordered region spans residues 169 to 190 (PPLPSSAPSSTKSSPESPVSGL). A compositionally biased stretch (low complexity) spans 174-188 (SAPSSTKSSPESPVS). Phosphothreonine; by IRAK4 is present on threonine 209. Residues 212–521 (FSEELRIGEG…TQVYKRLEGL (310 aa)) form the Protein kinase domain. Residues 218–226 (IGEGGFGCV) and lysine 239 contribute to the ATP site. Aspartate 340 (proton acceptor) is an active-site residue. ATP is bound by residues 342 to 345 (KSSN) and aspartate 358. Residue serine 375 is modified to Phosphoserine. At threonine 387 the chain carries Phosphothreonine. Disordered stretches follow at residues 527-655 (WELE…SEPP) and 689-710 (FPGLDLEPEKSQGPEESDEFQS). The span at 537-553 (PSPQENSYMSTTGSAQS) shows a compositional bias: polar residues. Serine 553 carries the post-translational modification Phosphoserine. Residues 567-576 (APAQAAQQLQ) are compositionally biased toward low complexity. Residues 616–639 (SCTQGGTTRESSVRSSPGFQPTTM) are compositionally biased toward polar residues. Residues 640–654 (EGSPTGSSSLLSSEP) are compositionally biased toward low complexity.

The protein belongs to the protein kinase superfamily. TKL Ser/Thr protein kinase family. Pelle subfamily. Homodimer. Forms a complex with TRAF6, PELI1, IRAK4 and MYD88. Direct binding of SMAD6 to PELI1 prevents complex formation and hence negatively regulates IL1R-TLR signaling and eventually NF-kappa-B-mediated gene expression. The TRAF6-PELI1-IRAK4-MYD88 complex recruits MAP3K7/TAK1, TAB1 and TAB2 to mediate NF-kappa-B activation. Interaction with MYD88 recruits IRAK1 to the stimulated receptor complex. Interacts with TOLLIP; this interaction occurs in the cytosol prior to receptor activation. Interacts with IL1RL1. Interacts (when polyubiquitinated) with IKBKG/NEMO. Interacts with RSAD2/viperin. Interacts with IRAK1BP1. Interacts with PELI2. Interacts with ZC3H12A; this interaction increases the interaction between ZC3H12A and IKBKB/IKKB. Interacts with IRAK4. Interacts with PELI3. Interacts with PELI1 and TRAF6. Interacts with INAVA; the interaction takes place upon PRR stimulation. Interacts (via C-terminus) with NFATC4 (via N-terminus). It depends on Mg(2+) as a cofactor. Following recruitment on the activated receptor complex, phosphorylated on Thr-209, probably by IRAK4, resulting in a conformational change of the kinase domain, allowing further phosphorylations to take place. Thr-387 phosphorylation in the activation loop is required to achieve full enzymatic activity. In terms of processing, polyubiquitinated by TRAF6 after cell stimulation with IL-1-beta by PELI1, PELI2 and PELI3. Polyubiquitination occurs with polyubiquitin chains linked through 'Lys-63'. Ubiquitination promotes interaction with NEMO/IKBKG. Also sumoylated; leading to nuclear translocation. As to expression, highly expressed in liver, followed by kidney and skeletal muscle.

The protein resides in the cytoplasm. Its subcellular location is the nucleus. It is found in the lipid droplet. The catalysed reaction is L-seryl-[protein] + ATP = O-phospho-L-seryl-[protein] + ADP + H(+). It carries out the reaction L-threonyl-[protein] + ATP = O-phospho-L-threonyl-[protein] + ADP + H(+). Its function is as follows. Serine/threonine-protein kinase that plays a critical role in initiating innate immune response against foreign pathogens. Involved in Toll-like receptor (TLR) and IL-1R signaling pathways. Is rapidly recruited by MYD88 to the receptor-signaling complex upon TLR activation. Association with MYD88 leads to IRAK1 phosphorylation by IRAK4 and subsequent autophosphorylation and kinase activation. Phosphorylates E3 ubiquitin ligases Pellino proteins (PELI1, PELI2 and PELI3) to promote pellino-mediated polyubiquitination of IRAK1. Then, the ubiquitin-binding domain of IKBKG/NEMO binds to polyubiquitinated IRAK1 bringing together the IRAK1-MAP3K7/TAK1-TRAF6 complex and the NEMO-IKKA-IKKB complex. In turn, MAP3K7/TAK1 activates IKKs (CHUK/IKKA and IKBKB/IKKB) leading to NF-kappa-B nuclear translocation and activation. Alternatively, phosphorylates TIRAP to promote its ubiquitination and subsequent degradation. Phosphorylates the interferon regulatory factor 7 (IRF7) to induce its activation and translocation to the nucleus, resulting in transcriptional activation of type I IFN genes, which drive the cell in an antiviral state. When sumoylated, translocates to the nucleus and phosphorylates STAT3. This Mus musculus (Mouse) protein is Interleukin-1 receptor-associated kinase 1 (Irak1).